The primary structure comprises 918 residues: Exostosin-like 3 (918 aa).

The Cytoplasmic portion of the chain corresponds to 1–30 (MTGYTMLRNGGVGNGGQTCMLRWSNRIRLT). The required for interaction with REG3A stretch occupies residues 1–140 (MTGYTMLRNG…LKNVISQTEH (140 aa)). The helical; Signal-anchor for type II membrane protein transmembrane segment at 31–51 (WLSFTLFIILVFFPLIAHYYL) threads the bilayer. The Lumenal portion of the chain corresponds to 52–918 (TTLDEADEAG…HDKTKCFKFI (867 aa)). 2 cysteine pairs are disulfide-bonded: Cys177-Cys182 and Cys188-Cys236. N-linked (GlcNAc...) asparagine glycosylation occurs at Asn290. At Ser361 the chain carries Phosphoserine. Cys399 and Cys414 are disulfide-bonded. A glycan (N-linked (GlcNAc...) asparagine) is linked at Asn591. The UDP-N-acetyl-alpha-D-glucosamine site is built by Leu667, Arg671, Asn696, Asn722, Arg727, Asp743, Asp744, and Asp745. Asp745 contacts Mn(2+). The N-linked (GlcNAc...) asparagine glycan is linked to Asn789. Cys830 and Cys878 are joined by a disulfide. Glu831, Asp832, and Arg875 together coordinate UDP-N-acetyl-alpha-D-glucosamine. Asp832 is an active-site residue.

Belongs to the glycosyltransferase 47 family. Homodimer; disulfide-linked. Interacts with REG3A. Mn(2+) is required as a cofactor. In terms of tissue distribution, expressed in pancreatic islet beta-cells. Expressed in lung epithelial cells. Expressed in microglia.

The protein resides in the endoplasmic reticulum membrane. Its subcellular location is the golgi apparatus. The protein localises to the cell membrane. It localises to the nucleus. The enzyme catalyses 3-O-(beta-D-GlcA-(1-&gt;3)-beta-D-Gal-(1-&gt;3)-beta-D-Gal-(1-&gt;4)-beta-D-Xyl)-L-seryl-[protein] + UDP-N-acetyl-alpha-D-glucosamine = 3-O-(alpha-D-GlcNAc-(1-&gt;4)-beta-D-GlcA-(1-&gt;3)-beta-D-Gal-(1-&gt;3)-beta-D-Gal-(1-&gt;4)-beta-D-Xyl)-L-seryl-[protein] + UDP + H(+). The protein operates within glycan metabolism; heparan sulfate biosynthesis. Glycosyltransferase which regulates the biosynthesis of heparan sulfate (HS). Initiates HS synthesis by transferring the first N-acetyl-alpha-D-glucosamine (alpha-GlcNAc) residue (GlcNAcT-I activity) to the tetrasaccharide linker (GlcA-Gal-Gal-Xyl-)Ser core linker. May also transfer alpha-GlcNAc residues during HS elongation (GlcNAcT-II activity). Lacks glucuronyl transferase II (GlcAT-II) activity. Important for both skeletal development and hematopoiesis, through the formation of HS proteoglycans (HSPGs). Through the synthesis of HS, regulates postnatal pancreatic islet maturation and insulin secretion. In terms of biological role, receptor for REG3A, REG3B and REG3G, induces the activation of downstream signaling pathways such as PI3K-AKT or RAS-RAF-MEK-ERK signaling pathway. Required for the function of REG3A in regulating keratinocyte proliferation and differentiation. Required for the inhibition of skin inflammation mediated by REG3A through the activation of PI3K-AKT-STAT3 pathway. Required for the function of REG3A and REG3G in glucose tolerance in pancreas. Expressed in microglia, is activated by nociceptor-derived REG3G in response to endotoxins, leading to the inhibition of kynurenine pathway to prevent endotoxic death. The chain is Exostosin-like 3 from Mus musculus (Mouse).